Reading from the N-terminus, the 209-residue chain is Ribosomal RNA large subunit methyltransferase E (209 aa).

Residues glycine 63, tryptophan 65, aspartate 83, aspartate 99, and aspartate 124 each coordinate S-adenosyl-L-methionine. Lysine 164 serves as the catalytic Proton acceptor. Positions 191 to 209 constitute a TRAM domain; that stretch reads EASRGRSREVYIVAMGYMG.

It belongs to the class I-like SAM-binding methyltransferase superfamily. RNA methyltransferase RlmE family.

It is found in the cytoplasm. It catalyses the reaction uridine(2552) in 23S rRNA + S-adenosyl-L-methionine = 2'-O-methyluridine(2552) in 23S rRNA + S-adenosyl-L-homocysteine + H(+). Specifically methylates the uridine in position 2552 of 23S rRNA at the 2'-O position of the ribose in the fully assembled 50S ribosomal subunit. The chain is Ribosomal RNA large subunit methyltransferase E from Histophilus somni (strain 129Pt) (Haemophilus somnus).